The sequence spans 268 residues: Small ribosomal subunit protein uS3 (268 aa).

The region spanning Ile40–Gly110 is the KH type-2 domain.

Belongs to the universal ribosomal protein uS3 family. Part of the 30S ribosomal subunit. Forms a tight complex with proteins S10 and S14.

Its function is as follows. Binds the lower part of the 30S subunit head. Binds mRNA in the 70S ribosome, positioning it for translation. The polypeptide is Small ribosomal subunit protein uS3 (Mycoplasma genitalium (strain ATCC 33530 / DSM 19775 / NCTC 10195 / G37) (Mycoplasmoides genitalium)).